A 411-amino-acid polypeptide reads, in one-letter code: Arginase (411 aa).

The segment at Asn83–Asn106 is disordered. Mn(2+) contacts are provided by His193, Asp216, His218, and Asp220. L-arginine is bound by residues Asn222, Ser229, and Asp274. Residues Asp323 and Asp325 each contribute to the Mn(2+) site.

This sequence belongs to the arginase family. In terms of assembly, homotrimer; oligomerization is dependent on Mn(2+) binding. The cofactor is Mn(2+).

The enzyme catalyses L-arginine + H2O = urea + L-ornithine. It participates in nitrogen metabolism; urea cycle; L-ornithine and urea from L-arginine: step 1/1. Feedback inhibition by product L-ornithine,. Inhibited by 2(S)-amino-6-boronohexanoic acid (ABH); however, with less efficiency than human ARG1. In terms of biological role, catalyzes the hydrolysis of L-arginine into urea and L-ornithine, which is a precursor for polyamine biosynthesis. May play a role in parasite intra-hepatic development during the host liver stage. The chain is Arginase from Plasmodium falciparum (isolate 3D7).